The chain runs to 276 residues: MKILKRIPVLAVLLVGLMTNCSNDSDSSSLSVANSTYETTALNSQKSSTDQPNSGSKSGQTLDLVNLGVAANFAILSKTGITDVYKSAITGDVGASPITGAAILLKCDEVTGTIFSVDAAGPACKITDASRLTTAVGDMQIAYDNAAGRLNPDFLNLGAGTIGGKTLTPGLYKWTSTLNIPTDITISGSSTDVWIFQVAGNLNMSSAVRITLAGGAQAKNIFWQTAGAVTLGSTSHFEGNILSQTGINMKTAASINGRMMAQTAVTLQMNTVTIPQ.

The signal sequence occupies residues Met-1–Asp-24. Residues Thr-79–Thr-82 carry the Ice-binding site motif (T-A/G-X-T/N) 1 motif. Cys-107 and Cys-124 are joined by a disulfide. 2 consecutive short sequence motifs (ice-binding site motif (T-A/G-X-T/N)) follow at residues Thr-245–Asn-248 and Thr-263–Thr-266.

The protein belongs to the ice-binding protein family. Monomer.

Its subcellular location is the secreted. In terms of biological role, has antifreeze activity for survival in a subzero environment. Binds to the surface of ice crystals and inhibits their growth. Has high thermal hysteresis (TH) activity, which is the ability to lower the freezing point of an aqueous solution below its melting point, and thus the freezing of the cell fluid can be prevented protecting the organism from ice damage. The TH activity of this protein is 2.2 degrees Celsius at 5 uM and 2.5 degrees Celsius at 50 uM. The polypeptide is Ice-binding protein (Flavobacterium frigoris (strain PS1)).